A 503-amino-acid polypeptide reads, in one-letter code: Probable cytosol aminopeptidase (503 aa).

The Mn(2+) site is built by Lys-270 and Asp-275. Residue Lys-282 is part of the active site. Residues Asp-293, Asp-352, and Glu-354 each coordinate Mn(2+). Arg-356 is a catalytic residue.

Belongs to the peptidase M17 family. Mn(2+) is required as a cofactor.

The protein resides in the cytoplasm. It carries out the reaction Release of an N-terminal amino acid, Xaa-|-Yaa-, in which Xaa is preferably Leu, but may be other amino acids including Pro although not Arg or Lys, and Yaa may be Pro. Amino acid amides and methyl esters are also readily hydrolyzed, but rates on arylamides are exceedingly low.. The enzyme catalyses Release of an N-terminal amino acid, preferentially leucine, but not glutamic or aspartic acids.. In terms of biological role, presumably involved in the processing and regular turnover of intracellular proteins. Catalyzes the removal of unsubstituted N-terminal amino acids from various peptides. This Yersinia enterocolitica serotype O:8 / biotype 1B (strain NCTC 13174 / 8081) protein is Probable cytosol aminopeptidase.